The primary structure comprises 1230 residues: MASASYHISNLLEKMTSSDKDFRFMATNDLMTELQKDSIKLDDDSERKVVKMILRLLEDKNGEVQNLAVKCLGPLVSKVKEYQVETIVDTLCTNMLSDKEQLRDISSIGLKTVIGELPPASSGSALAANVCKKITGRLTSAIAKQEDVSVQLEALDIMADMLSRQGGLLVNFHPSILTCLLPQLTSPRLAVRKRTIIALGHLVMSCGNIVFVDLIEHLLSELSKNDSMSTTRTYIQCIAAISRQAGHRIGEYLEKIIPLVVKFCNVDDDELREYCIQAFESFVRRCPKEVYPHVSTIINICLKYLTYDPNYNYDDEDEDENAMDADGGDDDDQGSDDEYSDDDDMSWKVRRAAAKCLDAVVSTRHEMLPEFYKTVSPALIARFKEREENVKADVFHAYLSLLKQTRPVQSWLCDPDAMEQGDTPLTMLQSQVPNIVKALHKQMKEKSVKTRQCCFNMLTELVNVLPGALTQHIPVLVPGIIFSLNDKSSSSNLKIDALSCLYVILCNHSPQVFHPHVQALVPPVVACVGDPFYKITSEALLVTQQLVKVIRPLDQPSSFDATPYIKDLFTCTIKRLKAADIDQEVKERAISCMGQIICNLGDNLGPDLSNTLQIFLERLKNEITRLTTVKALTLIAGSPLKIDLRPVLGEGVPILASFLRKNQRALKLGTLSALDILIKNYSDSLTAAMIDAVLDELPPLISESDMHVSQMAISFLTTLAKVYPSSLSKISGSILNELIGLVRSPLLQGGALSAMLDFFQALVVTGTNNLGYMDLLRMLTGPVYSQSTALTHKQSYYSIAKCVAALTRACPKEGPAVVGQFIQDVKNSRSTDSIRLLALLSLGEVGHHIDLSGQLELKSVILEAFSSPSEEVKSAASYALGSISVGNLPEYLPFVLQEITSQPKRQYLLLHSLKEIISSASVAGLKPYVENIWALLLKHCECAEEGTRNVVAECLGKLTLIDPETLLPRLKGYLISGSSYARSSVVTAVKFTISDHPQPIDPLLKNCIGDFLKTLEDPDLNVRRVALVTFNSAAHNKPSLIRDLLDSVLPHLYNETKVRKELIREVEMGPFKHTVDDGLDIRKAAFECMYTLLDSCLDRLDIFEFLNHVEDGLKDHYDIKMLTFLMLVRLSTLCPSAVLQRLDRLVEPLRATCTTKVKANSVKQEFEKQDELKRSAMRAVAALLTIPEAEKSPLMSEFQSQISSNPELAAIFESIQKDSSSTNLESMDTS.

Position 2 is an N-acetylalanine (alanine 2). HEAT repeat units follow at residues 2-39, 44-81, 83-119, 131-165, 171-208, 210-247, 248-282, 289-366, 370-407, 424-467, 471-510, and 515-552; these read ASAS…KDSI, DSER…KVKE, QVET…ELPP, CKKI…LSRQ, NFHP…SCGN, VFVD…QAGH, RIGE…FESF, EVYP…TRHE, EFYK…QTRP, PLTM…VLPG, QHIP…NHSP, and PHVQ…VIRP. The segment at 315 to 344 is disordered; it reads DEDEDENAMDADGGDDDDQGSDDEYSDDDD. Serine 335 is subject to Phosphoserine. Position 558 is a phosphoserine (serine 558). 15 HEAT repeats span residues 563 to 602, 606 to 643, 646 to 683, 688 to 725, 729 to 768, 770 to 808, 809 to 845, 852 to 889, 890 to 927, 928 to 960, 961 to 998, 1002 to 1039, 1043 to 1097, 1099 to 1133, and 1140 to 1189; these read PYIK…NLGD, PDLS…LKID, PVLG…NYSD, AMID…VYPS, KISG…TGTN, LGYM…ALTR, ACPK…LGEV, SGQL…GNLP, EYLP…GLKP, YVEN…KLTL, IDPE…DHPQ, PLLK…NKPS, DLLD…DSCL, RLDI…LSTL, and QRLD…IPEA. An N6-acetyllysine modification is found at lysine 971.

The protein belongs to the CAND family. In terms of assembly, interacts with TBP. Part of a complex that contains CUL1 and RBX1. Interacts with unneddylated cullins: interacts with CUL1, CUL2, CUL3, CUL4A, CUL4B and CUL5. Does not bind neddylated CUL1. Interaction with cullins is abolished in presence of COMMD1, which antagonizes with CAND1 for interacting with cullins. Interacts with ERCC6. Interacts with DCUN1D1, DCUN1D2, DCUN1D3, DCUN1D4 and DCUN1D5; these interactions are bridged by cullins and strongly inhibits the neddylation of cullins.

The protein localises to the cytoplasm. The protein resides in the nucleus. Key assembly factor of SCF (SKP1-CUL1-F-box protein) E3 ubiquitin ligase complexes that promotes the exchange of the substrate-recognition F-box subunit in SCF complexes, thereby playing a key role in the cellular repertoire of SCF complexes. Acts as a F-box protein exchange factor. The exchange activity of CAND1 is coupled with cycles of neddylation conjugation: in the deneddylated state, cullin-binding CAND1 binds CUL1-RBX1, increasing dissociation of the SCF complex and promoting exchange of the F-box protein. Probably plays a similar role in other cullin-RING E3 ubiquitin ligase complexes. In Mus musculus (Mouse), this protein is Cullin-associated NEDD8-dissociated protein 1 (Cand1).